The sequence spans 529 residues: Bifunctional purine biosynthesis protein PurH (529 aa).

An MGS-like domain is found at 8–158; it reads PSAPDLVAPK…KNHGYVAVCT (151 aa).

Belongs to the PurH family.

The catalysed reaction is (6R)-10-formyltetrahydrofolate + 5-amino-1-(5-phospho-beta-D-ribosyl)imidazole-4-carboxamide = 5-formamido-1-(5-phospho-D-ribosyl)imidazole-4-carboxamide + (6S)-5,6,7,8-tetrahydrofolate. It catalyses the reaction IMP + H2O = 5-formamido-1-(5-phospho-D-ribosyl)imidazole-4-carboxamide. The protein operates within purine metabolism; IMP biosynthesis via de novo pathway; 5-formamido-1-(5-phospho-D-ribosyl)imidazole-4-carboxamide from 5-amino-1-(5-phospho-D-ribosyl)imidazole-4-carboxamide (10-formyl THF route): step 1/1. It functions in the pathway purine metabolism; IMP biosynthesis via de novo pathway; IMP from 5-formamido-1-(5-phospho-D-ribosyl)imidazole-4-carboxamide: step 1/1. This Caulobacter vibrioides (strain ATCC 19089 / CIP 103742 / CB 15) (Caulobacter crescentus) protein is Bifunctional purine biosynthesis protein PurH.